The sequence spans 493 residues: Ribulose bisphosphate carboxylase large chain (493 aa).

Substrate is bound at residue Asn-132. Cys-181 bears the S-nitrosocysteine mark. Position 182 (Thr-182) interacts with substrate. Catalysis depends on Lys-184, which acts as the Proton acceptor. Residue Lys-186 coordinates substrate. Residues Lys-210, Asp-212, and Glu-213 each coordinate Mg(2+). Lys-210 carries the post-translational modification N6-carboxylysine. His-302 acts as the Proton acceptor in catalysis. Positions 303, 335, and 387 each coordinate substrate. Cys-460 carries the S-nitrosocysteine modification.

It belongs to the RuBisCO large chain family. Type I subfamily. As to quaternary structure, heterohexadecamer of 8 large chains and 8 small chains. Mg(2+) is required as a cofactor.

It localises to the plastid. It is found in the chloroplast. The enzyme catalyses 2 (2R)-3-phosphoglycerate + 2 H(+) = D-ribulose 1,5-bisphosphate + CO2 + H2O. It carries out the reaction D-ribulose 1,5-bisphosphate + O2 = 2-phosphoglycolate + (2R)-3-phosphoglycerate + 2 H(+). Its function is as follows. RuBisCO catalyzes two reactions: the carboxylation of D-ribulose 1,5-bisphosphate, the primary event in carbon dioxide fixation, as well as the oxidative fragmentation of the pentose substrate in the photorespiration process. Both reactions occur simultaneously and in competition at the same active site. Carbon dioxide and oxygen bind in the same pocket of the enzyme in a similar manner. The polypeptide is Ribulose bisphosphate carboxylase large chain (Galdieria sulphuraria (Red alga)).